A 484-amino-acid polypeptide reads, in one-letter code: tRNA sulfurtransferase (484 aa).

A THUMP domain is found at 63–167 (REMIERLTCT…LDRLFVIHRQ (105 aa)). Residues 185-186 (LM), K267, G289, and Q298 each bind ATP. An intrachain disulfide couples C346 to C457. Residues 405 to 483 (VLPGQIVIDI…GHTNVRVYRP (79 aa)) form the Rhodanese domain. C457 functions as the Cysteine persulfide intermediate in the catalytic mechanism.

Belongs to the ThiI family.

It is found in the cytoplasm. It carries out the reaction [ThiI sulfur-carrier protein]-S-sulfanyl-L-cysteine + a uridine in tRNA + 2 reduced [2Fe-2S]-[ferredoxin] + ATP + H(+) = [ThiI sulfur-carrier protein]-L-cysteine + a 4-thiouridine in tRNA + 2 oxidized [2Fe-2S]-[ferredoxin] + AMP + diphosphate. It catalyses the reaction [ThiS sulfur-carrier protein]-C-terminal Gly-Gly-AMP + S-sulfanyl-L-cysteinyl-[cysteine desulfurase] + AH2 = [ThiS sulfur-carrier protein]-C-terminal-Gly-aminoethanethioate + L-cysteinyl-[cysteine desulfurase] + A + AMP + 2 H(+). It participates in cofactor biosynthesis; thiamine diphosphate biosynthesis. Catalyzes the ATP-dependent transfer of a sulfur to tRNA to produce 4-thiouridine in position 8 of tRNAs, which functions as a near-UV photosensor. Also catalyzes the transfer of sulfur to the sulfur carrier protein ThiS, forming ThiS-thiocarboxylate. This is a step in the synthesis of thiazole, in the thiamine biosynthesis pathway. The sulfur is donated as persulfide by IscS. This is tRNA sulfurtransferase from Pseudomonas paraeruginosa (strain DSM 24068 / PA7) (Pseudomonas aeruginosa (strain PA7)).